A 118-amino-acid chain; its full sequence is Small ribosomal subunit protein uS13 (118 aa).

The tract at residues 94–118 is disordered; that stretch reads GLPVRGQRTKTNARTRKGPRKPIRK.

Belongs to the universal ribosomal protein uS13 family. In terms of assembly, part of the 30S ribosomal subunit. Forms a loose heterodimer with protein S19. Forms two bridges to the 50S subunit in the 70S ribosome.

Functionally, located at the top of the head of the 30S subunit, it contacts several helices of the 16S rRNA. In the 70S ribosome it contacts the 23S rRNA (bridge B1a) and protein L5 of the 50S subunit (bridge B1b), connecting the 2 subunits; these bridges are implicated in subunit movement. Contacts the tRNAs in the A and P-sites. This chain is Small ribosomal subunit protein uS13, found in Marinobacter nauticus (strain ATCC 700491 / DSM 11845 / VT8) (Marinobacter aquaeolei).